The primary structure comprises 514 residues: Cobyric acid synthase (514 aa).

Residues 249–448 enclose the GATase cobBQ-type domain; it reads LIDIAVIKLP…VHGVFDNDEI (200 aa). Residue cysteine 330 is the Nucleophile of the active site. The active site involves histidine 440.

This sequence belongs to the CobB/CobQ family. CobQ subfamily.

It participates in cofactor biosynthesis; adenosylcobalamin biosynthesis. In terms of biological role, catalyzes amidations at positions B, D, E, and G on adenosylcobyrinic A,C-diamide. NH(2) groups are provided by glutamine, and one molecule of ATP is hydrogenolyzed for each amidation. The polypeptide is Cobyric acid synthase (Ruminiclostridium cellulolyticum (strain ATCC 35319 / DSM 5812 / JCM 6584 / H10) (Clostridium cellulolyticum)).